The following is a 1029-amino-acid chain: Putative B3 domain-containing protein Os03g0621600 (1029 aa).

DNA-binding regions (TF-B3) lie at residues 147 to 240, 339 to 430, and 450 to 543; these read DTYF…FDPS, VAVM…RKMK, and EKYF…FDPS. Positions 572–605 are disordered; the sequence is TSYHDQPKGNKHWMQKDSSSKGNKIGNTRSSNTP. Polar residues predominate over residues 591–605; it reads SKGNKIGNTRSSNTP. The TF-B3 4 DNA-binding region spans 731–824; sequence YKNFFKVMIG…KLKVLIFGPS (94 aa). The segment covering 852–867 has biased composition (polar residues); it reads SSNSHDLPVKSPQNVS. Positions 852–882 are disordered; it reads SSNSHDLPVKSPQNVSKSEKQWDSSEQENDT. The segment at residues 934–1029 is a DNA-binding region (TF-B3 5); it reads GCILRKSRVH…SMNVHIIPKK (96 aa).

It is found in the nucleus. The protein is Putative B3 domain-containing protein Os03g0621600 of Oryza sativa subsp. japonica (Rice).